The primary structure comprises 656 residues: Ribosome quality control complex subunit 1 (656 aa).

The segment covering 1–11 (MSSRALRKLQR) has biased composition (basic residues). 3 disordered regions span residues 1 to 35 (MSSR…FSST), 51 to 122 (NNAI…LESS), and 634 to 656 (LFTS…GQGD). The span at 17–32 (LLEEALDSESDEDDEF) shows a compositional bias: acidic residues. Positions 51 to 63 (NNAINSEAEKSVS) are enriched in basic and acidic residues. 3 positions are modified to phosphoserine: S56, S61, and S63. Basic residues predominate over residues 83–101 (KKAKNKKKKKKQQKKKKVT). The span at 102–122 (GKRDLDNQSSDNEKLEGLESS) shows a compositional bias: basic and acidic residues. A phosphoserine mark is found at S110 and S111.

The protein belongs to the TCF25 family. In terms of assembly, component of the ribosome quality control complex (RQC), composed of the E3 ubiquitin ligase rkr1/ltn1, rqc1 and mtr1/rqc2, as well as cdc48 and its ubiquitin-binding cofactors. RQC forms a stable complex with 60S ribosomal subunits.

It is found in the cytoplasm. Functionally, component of the ribosome quality control complex (RQC), a ribosome-associated complex that mediates ubiquitination and extraction of incompletely synthesized nascent chains for proteasomal degradation. Within the RQC complex, rqc1 is essential for the recruitment of cdc48 to incompletely synthesized nascent polypeptides that are ubiquitinated by rkr1/ltn1. In Schizosaccharomyces pombe (strain 972 / ATCC 24843) (Fission yeast), this protein is Ribosome quality control complex subunit 1.